The chain runs to 351 residues: Probable glucuronosyltransferase Os10g0205300 (351 aa).

At 1 to 11 (MAAPPCPPRRP) the chain is on the cytoplasmic side. Residues 12–32 (ISAPCFLLCFLLGFVAGLFPF) traverse the membrane as a helical; Signal-anchor for type II membrane protein segment. Topologically, residues 33 to 351 (AHRHLHLDLH…PLKKEARPLL (319 aa)) are lumenal. The segment at 138 to 169 (SSPVPDAPQDRPRRRGRRQDRPAVDSRARQRN) is disordered. A compositionally biased stretch (basic and acidic residues) spans 156-169 (QDRPAVDSRARQRN). The N-linked (GlcNAc...) asparagine glycan is linked to asparagine 259.

Belongs to the glycosyltransferase 43 family.

The protein localises to the golgi apparatus membrane. In terms of biological role, involved in the synthesis of glucuronoxylan hemicellulose in secondary cell walls. The chain is Probable glucuronosyltransferase Os10g0205300 from Oryza sativa subsp. japonica (Rice).